A 578-amino-acid chain; its full sequence is Zinc finger-containing ubiquitin peptidase 1 (578 aa).

The segment at 2 to 24 adopts a C2H2-type 1 zinc-finger fold; that stretch reads LSCNICGETVTSEPDMKAHLIVH. The C2H2-type 2; atypical zinc finger occupies 29–52; sequence IICPFCKLSGVNYDEMCFHIETAH. 2 consecutive C2H2-type zinc fingers follow at residues 154–177 and 193–215; these read PECP…KTKH and YDCP…VDLH. Residues 226–248 are MIU; the sequence is DRVQCSGDLQLAHQLQQEEDRKR. The zUBD/ZHA stretch occupies residues 249–274; sequence RSEESRQEIEEFQKLQRQYGLDNSGG. N6-acetyllysine is present on Lys262. Catalysis depends on Cys360, which acts as the Nucleophile. Residue His491 is the Proton acceptor of the active site. Asp512 is an active-site residue.

It belongs to the peptidase C78 family. ZUFSP subfamily. Interacts with RPA1 and RPA2.

It localises to the cytoplasm. The protein localises to the nucleus. The enzyme catalyses Thiol-dependent hydrolysis of ester, thioester, amide, peptide and isopeptide bonds formed by the C-terminal Gly of ubiquitin (a 76-residue protein attached to proteins as an intracellular targeting signal).. In terms of biological role, deubiquitinase with endodeubiquitinase activity that specifically interacts with and cleaves 'Lys-63'-linked long polyubiquitin chains. Shows only weak activity against 'Lys-11' and 'Lys-48'-linked chains. Plays an important role in genome stability pathways, functioning to prevent spontaneous DNA damage and also promote cellular survival in response to exogenous DNA damage. Modulates the ubiquitination status of replication protein A (RPA) complex proteins in response to replication stress. The chain is Zinc finger-containing ubiquitin peptidase 1 from Homo sapiens (Human).